A 481-amino-acid polypeptide reads, in one-letter code: MSKPIRVRYAPSPTGLLHIGNARTALFNYLYARRHGGTFIIRIEDTDRKRHVEDGERSQLENLKWLGMDWDESPETHENYRQSERLALYQQYIDQLLAEGKAYKSYVTEEELAAERERQEAAGETPRYINEFIGMSADEKAKYIAEREAAGIVPTVRLAVNESGIYKWTDMVKGDIEFEGGNIGGDWVIQKKDGYPTYNFAVVVDDHDMQISHVIRGDDHIANTPKQLMVYEALGWEAPEFGHMTLIINSETGKKLSKRDTNTLQFIEDYRKKGYMPEAVFNFIALLGWNPGGEEEIFSREQLIALFDENRLSKSPAAFDQKKMDWMSNEYLKHADFETVYALCKPFLEEAGRLTEKAEKLVELYKPQLKSADEIIPLTDLFFSDFPELTEAEKEVMAGETVSTVLQAFKAKLEAMSDEDFKPENIFPQIKAVQKETGIKGKNLFMPIRIAVSGEMHGPELPNTIYLLGRDKSIEHIKNML.

The 'HIGH' region signature appears at proline 11–asparagine 21. Positions lysine 255–arginine 259 match the 'KMSKS' region motif. Residue lysine 258 coordinates ATP.

Belongs to the class-I aminoacyl-tRNA synthetase family. Glutamate--tRNA ligase type 1 subfamily. Monomer.

Its subcellular location is the cytoplasm. It carries out the reaction tRNA(Glu) + L-glutamate + ATP = L-glutamyl-tRNA(Glu) + AMP + diphosphate. Catalyzes the attachment of glutamate to tRNA(Glu) in a two-step reaction: glutamate is first activated by ATP to form Glu-AMP and then transferred to the acceptor end of tRNA(Glu). The polypeptide is Glutamate--tRNA ligase (Streptococcus pyogenes serotype M6 (strain ATCC BAA-946 / MGAS10394)).